Reading from the N-terminus, the 396-residue chain is MKEIKGTIASPKGFLADAVHAQLKYKNLDLGLILSQVPAAIAGVFTTNKVCAAPVLIDRQIVKKGQARAIICNSAVANAVTGEQGYANALKTQKLLAEKFELKAEEVAVCSTGVIGVQLPMEKIATGISKLSQNEGTAAYFAKAILTTDTQTKTINFEAEIGGQIVNMAGVCKGSGMIHPNMATMLAFITTDAKIAQALLQKTLSEIIETTFNQITVDGDTSTNDTVLLMANGQAKNNEILEGSSDYLLFKEMLAKVCQSLAKQIAADGEGATKLIEVTVKGAPNDLTARFIAKKIVGSSLVKTAIFGADPNWGRIISSIGQVANFEVSDIELKLQDELVLYHSTPVDFDAAFLSEKLKEDKIEIIADLNAGSGLGQAWGCDLTYKYVEINALYTS.

T147, K173, T184, E270, N391, and S396 together coordinate substrate. T184 (nucleophile) is an active-site residue.

Belongs to the ArgJ family. In terms of assembly, heterotetramer of two alpha and two beta chains.

It is found in the cytoplasm. The enzyme catalyses N(2)-acetyl-L-ornithine + L-glutamate = N-acetyl-L-glutamate + L-ornithine. The catalysed reaction is L-glutamate + acetyl-CoA = N-acetyl-L-glutamate + CoA + H(+). It functions in the pathway amino-acid biosynthesis; L-arginine biosynthesis; L-ornithine and N-acetyl-L-glutamate from L-glutamate and N(2)-acetyl-L-ornithine (cyclic): step 1/1. The protein operates within amino-acid biosynthesis; L-arginine biosynthesis; N(2)-acetyl-L-ornithine from L-glutamate: step 1/4. Its function is as follows. Catalyzes two activities which are involved in the cyclic version of arginine biosynthesis: the synthesis of N-acetylglutamate from glutamate and acetyl-CoA as the acetyl donor, and of ornithine by transacetylation between N(2)-acetylornithine and glutamate. This Lactococcus lactis subsp. lactis (strain IL1403) (Streptococcus lactis) protein is Arginine biosynthesis bifunctional protein ArgJ.